The following is a 118-amino-acid chain: Acidic phospholipase A2 (118 aa).

Residues tyrosine 25, glycine 27, and glycine 29 each coordinate Ca(2+). Histidine 45 is a catalytic residue. Aspartate 46 contributes to the Ca(2+) binding site. The active site involves aspartate 86.

Belongs to the phospholipase A2 family. Group II subfamily. D49 sub-subfamily. Requires Ca(2+) as cofactor. In terms of processing, six disulfide bonds are present. In terms of tissue distribution, expressed by the venom gland.

It is found in the secreted. The catalysed reaction is a 1,2-diacyl-sn-glycero-3-phosphocholine + H2O = a 1-acyl-sn-glycero-3-phosphocholine + a fatty acid + H(+). In terms of biological role, PLA2 catalyzes the calcium-dependent hydrolysis of the 2-acyl groups in 3-sn-phosphoglycerides. This is Acidic phospholipase A2 from Bitis gabonica (Gaboon adder).